Here is a 232-residue protein sequence, read N- to C-terminus: tRNA (guanine-N(1)-)-methyltransferase (232 aa).

S-adenosyl-L-methionine contacts are provided by residues Gly111 and 131–136 (IGDYIL).

It belongs to the RNA methyltransferase TrmD family. In terms of assembly, homodimer.

The protein resides in the cytoplasm. It carries out the reaction guanosine(37) in tRNA + S-adenosyl-L-methionine = N(1)-methylguanosine(37) in tRNA + S-adenosyl-L-homocysteine + H(+). In terms of biological role, specifically methylates guanosine-37 in various tRNAs. The polypeptide is tRNA (guanine-N(1)-)-methyltransferase (Bartonella bacilliformis (strain ATCC 35685 / KC583 / Herrer 020/F12,63)).